The primary structure comprises 74 residues: RNA-binding protein Hfq (74 aa).

The region spanning 9–69 is the Sm domain; it reads DQYLNQLRKN…ISTFSPVKNV (61 aa).

Belongs to the Hfq family. Homohexamer.

RNA chaperone that binds small regulatory RNA (sRNAs) and mRNAs to facilitate mRNA translational regulation in response to envelope stress, environmental stress and changes in metabolite concentrations. Also binds with high specificity to tRNAs. The polypeptide is RNA-binding protein Hfq (Oceanobacillus iheyensis (strain DSM 14371 / CIP 107618 / JCM 11309 / KCTC 3954 / HTE831)).